The sequence spans 357 residues: Aminotransferase TOXF (357 aa).

Residue Arg87 coordinates pyridoxal 5'-phosphate. Lys188 bears the N6-(pyridoxal phosphate)lysine mark. Pyridoxal 5'-phosphate is bound at residue Glu227.

This sequence belongs to the class-IV pyridoxal-phosphate-dependent aminotransferase family. Requires pyridoxal 5'-phosphate as cofactor.

The protein operates within mycotoxin biosynthesis; HC-toxin biosynthesis. Functionally, aminotransferase, part of the diffuse TOX2 gene cluster that mediates the biosynthesis of the HC-toxin, cyclic tetrapeptide of structure cyclo(D-Pro-L-Ala-D-Ala-L-Aeo), where Aeo stands for 2-amino-9,10-epoxi-8-oxodecanoic acid. HC-toxin is a determinant of specificity and virulence in the interaction between the producing fungus and its host, maize. TOXF contributes to the synthesis of 2-amino-9,10-epoxi-8-oxodecanoic acid, an essential precursor for the production of the major forms of HC-toxin by the non-ribosomal peptide synthetase HTS1. This Cochliobolus carbonum (Maize leaf spot fungus) protein is Aminotransferase TOXF (TOXF).